We begin with the raw amino-acid sequence, 161 residues long: Blue copper protein 1a (161 aa).

A signal peptide spans 1–23 (MASSRVVLILSISMVLLSSVAIA). The Phytocyanin domain occupies 24 to 124 (TDHIVGDDKG…QMKLVITVLA (101 aa)). His64 serves as a coordination point for Cu cation. An N-linked (GlcNAc...) asparagine glycan is attached at Asn70. Cys77 and Cys111 are oxidised to a cystine. Cu cation contacts are provided by Cys105, His110, and Met116. A helical transmembrane segment spans residues 141-161 (VVSSLFGVVMAIMVAIAVIFA).

The protein localises to the membrane. This is Blue copper protein 1a from Medicago truncatula (Barrel medic).